Consider the following 30-residue polypeptide: Dermaseptin-3.4TR (30 aa).

Expressed by the skin glands.

It localises to the secreted. Its function is as follows. Has antimicrobial activity. This Phyllomedusa trinitatis (Trinidad leaf frog) protein is Dermaseptin-3.4TR.